A 141-amino-acid polypeptide reads, in one-letter code: Cystatin-SN (141 aa).

An N-terminal signal peptide occupies residues 1-20 (MAQYLSTLLLLLATLAVALA). A Secondary area of contact motif is present at residues 76-80 (QTVGG). Cystine bridges form between cysteine 94–cysteine 104 and cysteine 118–cysteine 138.

Belongs to the cystatin family. In terms of tissue distribution, expressed in submandibular and sublingual saliva but not in parotid saliva (at protein level). Expressed in saliva, tears, urine and seminal fluid.

It localises to the secreted. In terms of biological role, human saliva appears to contain several cysteine proteinase inhibitors that are immunologically related to cystatin S but that differ in their specificity due to amino acid sequence differences. Cystatin SN, with a pI of 7.5, is a much better inhibitor of papain and dipeptidyl peptidase I than is cystatin S, although both inhibit ficin equally well. This chain is Cystatin-SN (CST1), found in Homo sapiens (Human).